A 156-amino-acid polypeptide reads, in one-letter code: ATP synthase subunit b (156 aa).

Residues 5 to 27 (ITLIGQMITFAIFVGFTMKFVWP) form a helical membrane-spanning segment.

It belongs to the ATPase B chain family. In terms of assembly, F-type ATPases have 2 components, F(1) - the catalytic core - and F(0) - the membrane proton channel. F(1) has five subunits: alpha(3), beta(3), gamma(1), delta(1), epsilon(1). F(0) has three main subunits: a(1), b(2) and c(10-14). The alpha and beta chains form an alternating ring which encloses part of the gamma chain. F(1) is attached to F(0) by a central stalk formed by the gamma and epsilon chains, while a peripheral stalk is formed by the delta and b chains.

The protein resides in the cell inner membrane. Its function is as follows. F(1)F(0) ATP synthase produces ATP from ADP in the presence of a proton or sodium gradient. F-type ATPases consist of two structural domains, F(1) containing the extramembraneous catalytic core and F(0) containing the membrane proton channel, linked together by a central stalk and a peripheral stalk. During catalysis, ATP synthesis in the catalytic domain of F(1) is coupled via a rotary mechanism of the central stalk subunits to proton translocation. Component of the F(0) channel, it forms part of the peripheral stalk, linking F(1) to F(0). The protein is ATP synthase subunit b of Francisella tularensis subsp. tularensis (strain WY96-3418).